Here is a 347-residue protein sequence, read N- to C-terminus: Protein RecA (347 aa).

Residue 67-74 (GPESSGKT) participates in ATP binding. Residues 327–347 (ALGLSSPTPKENGKEKGKAKP) are disordered. Over residues 337 to 347 (ENGKEKGKAKP) the composition is skewed to basic and acidic residues.

The protein belongs to the RecA family.

The protein localises to the cytoplasm. In terms of biological role, can catalyze the hydrolysis of ATP in the presence of single-stranded DNA, the ATP-dependent uptake of single-stranded DNA by duplex DNA, and the ATP-dependent hybridization of homologous single-stranded DNAs. It interacts with LexA causing its activation and leading to its autocatalytic cleavage. In Desulforapulum autotrophicum (strain ATCC 43914 / DSM 3382 / VKM B-1955 / HRM2) (Desulfobacterium autotrophicum), this protein is Protein RecA.